The primary structure comprises 530 residues: 26S proteasome non-ATPase regulatory subunit 3 (530 aa).

A compositionally biased stretch (basic and acidic residues) spans 1 to 16; it reads MKQEGSARRRGADKAK. The segment at 1-65 is disordered; it reads MKQEGSARRR…TEHSQRELDT (65 aa). A compositionally biased stretch (pro residues) spans 17-30; the sequence is PPPGGEQEPPPPAP. A Glycyl lysine isopeptide (Lys-Gly) (interchain with G-Cter in SUMO1); alternate cross-link involves residue Lys-36. Residue Lys-36 forms a Glycyl lysine isopeptide (Lys-Gly) (interchain with G-Cter in SUMO2); alternate linkage. The region spanning 282-461 is the PCI domain; it reads ARYLYYTGRI…GYVQSKEMID (180 aa). 2 positions are modified to phosphoserine: Ser-414 and Ser-426. Residues 496-530 are disordered; that stretch reads SYNKDLESAEERREREQQDLEFAKEMAEDDDDSFP. Residues 497–521 show a composition bias toward basic and acidic residues; that stretch reads YNKDLESAEERREREQQDLEFAKEM.

This sequence belongs to the proteasome subunit S3 family. Component of the 19S proteasome regulatory particle complex. The 26S proteasome consists of a 20S core particle (CP) and two 19S regulatory subunits (RP). The regulatory particle is made of a lid composed of 9 subunits including PSMD3, a base containing 6 ATPases and few additional components. Interacts with UBQLN1 (via ubiquitin-like domain). Interacts with ERCC6.

In terms of biological role, component of the 26S proteasome, a multiprotein complex involved in the ATP-dependent degradation of ubiquitinated proteins. This complex plays a key role in the maintenance of protein homeostasis by removing misfolded or damaged proteins, which could impair cellular functions, and by removing proteins whose functions are no longer required. Therefore, the proteasome participates in numerous cellular processes, including cell cycle progression, apoptosis, or DNA damage repair. The polypeptide is 26S proteasome non-ATPase regulatory subunit 3 (Psmd3) (Mus musculus (Mouse)).